The following is a 129-amino-acid chain: MKSVQLCLLLWCWRAICCRSCELTNITIAVEKEECRFCVSINTTWCAGYCYTRDLVYKDPARPNTQKVCTFKELVYETVRLPGCAHHSDSFYTYPVATECHCSKCDSHSTDCTVRGLGPSYCSFGEMKE.

Positions Met1–Cys18 are cleaved as a signal peptide. 6 disulfides stabilise this stretch: Cys21/Cys69, Cys35/Cys84, Cys38/Cys122, Cys46/Cys100, Cys50/Cys102, and Cys105/Cys112. Asn25 and Asn42 each carry an N-linked (GlcNAc...) asparagine glycan.

The protein belongs to the glycoprotein hormones subunit beta family. As to quaternary structure, heterodimer. The active follitropin is a heterodimer composed of an alpha chain/CGA shared with other hormones and a unique beta chain/FSHB shown here.

The protein resides in the secreted. In terms of biological role, together with the alpha chain CGA constitutes follitropin, the follicle-stimulating hormone, and provides its biological specificity to the hormone heterodimer. Binds FSHR, a G protein-coupled receptor, on target cells to activate downstream signaling pathways. Follitropin is involved in follicle development and spermatogenesis in reproductive organs. This chain is Follitropin subunit beta (FSHB), found in Meriones unguiculatus (Mongolian jird).